The chain runs to 779 residues: Beta-galactosidase 15 (779 aa).

Residues 1 to 19 form the signal peptide; sequence MVSLSFILCCVLVSSCAYA. N-linked (GlcNAc...) asparagine glycosylation occurs at Asn-148. Glu-178 functions as the Proton donor in the catalytic mechanism. The Nucleophile role is filled by Glu-247. Residues Asn-248, Asn-345, Asn-374, Asn-489, Asn-495, and Asn-555 are each glycosylated (N-linked (GlcNAc...) asparagine). Residues 694–779 form the SUEL-type lectin domain; it reads VYEKNVLELS…AKRLAVEAIC (86 aa).

The protein belongs to the glycosyl hydrolase 35 family. Ubiquitous, with higher levels in roots and siliques.

The protein resides in the secreted. It localises to the extracellular space. The protein localises to the apoplast. It catalyses the reaction Hydrolysis of terminal non-reducing beta-D-galactose residues in beta-D-galactosides.. This is Beta-galactosidase 15 (BGAL15) from Arabidopsis thaliana (Mouse-ear cress).